Here is a 216-residue protein sequence, read N- to C-terminus: Putative cat eye syndrome critical region protein 9 (216 aa).

An N-terminal signal peptide occupies residues 1-23 (MQSHLAPLACAAAAGRAGGSCQA). N-linked (GlcNAc...) asparagine glycosylation is present at asparagine 148.

Ubiquitously expressed with higher expression in heart.

The protein localises to the secreted. This Homo sapiens (Human) protein is Putative cat eye syndrome critical region protein 9 (CECR9).